The primary structure comprises 350 residues: Histidinol-phosphate aminotransferase (350 aa).

Position 209 is an N6-(pyridoxal phosphate)lysine (K209).

This sequence belongs to the class-II pyridoxal-phosphate-dependent aminotransferase family. Histidinol-phosphate aminotransferase subfamily. In terms of assembly, homodimer. The cofactor is pyridoxal 5'-phosphate.

The enzyme catalyses L-histidinol phosphate + 2-oxoglutarate = 3-(imidazol-4-yl)-2-oxopropyl phosphate + L-glutamate. It functions in the pathway amino-acid biosynthesis; L-histidine biosynthesis; L-histidine from 5-phospho-alpha-D-ribose 1-diphosphate: step 7/9. This chain is Histidinol-phosphate aminotransferase, found in Christiangramia forsetii (strain DSM 17595 / CGMCC 1.15422 / KT0803) (Gramella forsetii).